The chain runs to 329 residues: Ferredoxin--NADP reductase (329 aa).

FAD contacts are provided by Asp28, Gln36, Tyr41, Ala81, Phe115, Asp282, and Thr323.

Belongs to the ferredoxin--NADP reductase type 2 family. As to quaternary structure, homodimer. The cofactor is FAD.

It carries out the reaction 2 reduced [2Fe-2S]-[ferredoxin] + NADP(+) + H(+) = 2 oxidized [2Fe-2S]-[ferredoxin] + NADPH. The chain is Ferredoxin--NADP reductase from Anaplasma marginale (strain St. Maries).